Here is a 415-residue protein sequence, read N- to C-terminus: Serine hydroxymethyltransferase (415 aa).

Residues Leu-117 and 121–123 each bind (6S)-5,6,7,8-tetrahydrofolate; that span reads GHL. Lys-226 carries the post-translational modification N6-(pyridoxal phosphate)lysine. Residues Glu-241 and 349–351 contribute to the (6S)-5,6,7,8-tetrahydrofolate site; that span reads SPF.

It belongs to the SHMT family. In terms of assembly, homodimer. Requires pyridoxal 5'-phosphate as cofactor.

The protein localises to the cytoplasm. The enzyme catalyses (6R)-5,10-methylene-5,6,7,8-tetrahydrofolate + glycine + H2O = (6S)-5,6,7,8-tetrahydrofolate + L-serine. It participates in one-carbon metabolism; tetrahydrofolate interconversion. It functions in the pathway amino-acid biosynthesis; glycine biosynthesis; glycine from L-serine: step 1/1. In terms of biological role, catalyzes the reversible interconversion of serine and glycine with tetrahydrofolate (THF) serving as the one-carbon carrier. This reaction serves as the major source of one-carbon groups required for the biosynthesis of purines, thymidylate, methionine, and other important biomolecules. Also exhibits THF-independent aldolase activity toward beta-hydroxyamino acids, producing glycine and aldehydes, via a retro-aldol mechanism. This is Serine hydroxymethyltransferase from Geotalea uraniireducens (strain Rf4) (Geobacter uraniireducens).